A 227-amino-acid chain; its full sequence is MPARWGCLFPGKYPCQTGLRHMSDRASVIYILDDDNAVLEALSSLVRSIGLSVECFSSASVFLNDVNRSACGCLILDVRMPEMSGLDVQRQLKELGEQIPIIFISGHGDIPMAVKAIKAGAVDFFTKPFREEELLGAIRAALKLAPQQRSNAPRVSELKENYESLSKREQQVLKFVLRGYLNKQTALELDISEATVKVHRHNIMRKMKVSSIQDLVRVTERLKDSLE.

Positions 28–142 (VIYILDDDNA…ELLGAIRAAL (115 aa)) constitute a Response regulatory domain. A 4-aspartylphosphate modification is found at D77. One can recognise an HTH luxR-type domain in the interval 158–223 (LKENYESLSK…DLVRVTERLK (66 aa)). A DNA-binding region (H-T-H motif) is located at residues 182–201 (NKQTALELDISEATVKVHRH).

In terms of processing, phosphorylated by TodS.

The protein localises to the cytoplasm. Its function is as follows. Member of the two-component regulatory system TodS/TodT involved in the regulation of toluene degradation. Phosphorylated TodT activates transcription of the tod operon (todXFC1C2BADEGIH). Binds specifically to a 6-bp palindromic DNA structure in the tod promoter region. This Pseudomonas putida (strain ATCC 700007 / DSM 6899 / JCM 31910 / BCRC 17059 / LMG 24140 / F1) protein is Response regulator protein TodT (todT).